We begin with the raw amino-acid sequence, 355 residues long: Protein-glutamate methylesterase/protein-glutamine glutaminase 3 (355 aa).

Residues 8–126 (RVLVVDDSPT…AEELRRWGKE (119 aa)) form the Response regulatory domain. Aspartate 59 bears the 4-aspartylphosphate mark. Residues 152 to 337 (PPTGARVDIF…LASMPELILQ (186 aa)) enclose the CheB-type methylesterase domain. Active-site residues include serine 166, histidine 193, and aspartate 284.

Belongs to the CheB family. In terms of processing, phosphorylated by CheA. Phosphorylation of the N-terminal regulatory domain activates the methylesterase activity.

Its subcellular location is the cytoplasm. The enzyme catalyses [protein]-L-glutamate 5-O-methyl ester + H2O = L-glutamyl-[protein] + methanol + H(+). The catalysed reaction is L-glutaminyl-[protein] + H2O = L-glutamyl-[protein] + NH4(+). Its function is as follows. Involved in chemotaxis. Part of a chemotaxis signal transduction system that modulates chemotaxis in response to various stimuli. Catalyzes the demethylation of specific methylglutamate residues introduced into the chemoreceptors (methyl-accepting chemotaxis proteins or MCP) by CheR. Also mediates the irreversible deamidation of specific glutamine residues to glutamic acid. The sequence is that of Protein-glutamate methylesterase/protein-glutamine glutaminase 3 from Myxococcus xanthus (strain DK1622).